The sequence spans 179 residues: Large ribosomal subunit protein uL5 (179 aa).

The protein belongs to the universal ribosomal protein uL5 family. Part of the 50S ribosomal subunit; part of the 5S rRNA/L5/L18/L25 subcomplex. Contacts the 5S rRNA and the P site tRNA. Forms a bridge to the 30S subunit in the 70S ribosome.

This is one of the proteins that bind and probably mediate the attachment of the 5S RNA into the large ribosomal subunit, where it forms part of the central protuberance. In the 70S ribosome it contacts protein S13 of the 30S subunit (bridge B1b), connecting the 2 subunits; this bridge is implicated in subunit movement. Contacts the P site tRNA; the 5S rRNA and some of its associated proteins might help stabilize positioning of ribosome-bound tRNAs. This chain is Large ribosomal subunit protein uL5, found in Halothermothrix orenii (strain H 168 / OCM 544 / DSM 9562).